Consider the following 289-residue polypeptide: ATP synthase gamma chain (289 aa).

This sequence belongs to the ATPase gamma chain family. As to quaternary structure, F-type ATPases have 2 components, CF(1) - the catalytic core - and CF(0) - the membrane proton channel. CF(1) has five subunits: alpha(3), beta(3), gamma(1), delta(1), epsilon(1). CF(0) has three main subunits: a, b and c.

The protein resides in the cell inner membrane. In terms of biological role, produces ATP from ADP in the presence of a proton gradient across the membrane. The gamma chain is believed to be important in regulating ATPase activity and the flow of protons through the CF(0) complex. This is ATP synthase gamma chain from Polynucleobacter asymbioticus (strain DSM 18221 / CIP 109841 / QLW-P1DMWA-1) (Polynucleobacter necessarius subsp. asymbioticus).